Reading from the N-terminus, the 132-residue chain is Small ribosomal subunit protein uS8 (132 aa).

It belongs to the universal ribosomal protein uS8 family. As to quaternary structure, part of the 30S ribosomal subunit. Contacts proteins S5 and S12.

In terms of biological role, one of the primary rRNA binding proteins, it binds directly to 16S rRNA central domain where it helps coordinate assembly of the platform of the 30S subunit. This Caldanaerobacter subterraneus subsp. tengcongensis (strain DSM 15242 / JCM 11007 / NBRC 100824 / MB4) (Thermoanaerobacter tengcongensis) protein is Small ribosomal subunit protein uS8 (rpsH).